Reading from the N-terminus, the 300-residue chain is MTDTPDPAAVLSPAVKAAILSEALPYIRRFHGKTIVVKYGGNAMTEERLQRSFAHDVVLLKLVGLNPVVVHGGGPQIDDALRRLGKQGTFVQGMRVTDAETMEVVEWVLGGQVQQDIVMMINEAGGKAVGLTGKDGMLLQARKKLMADKEKPGELLDIGLVGDVTRVEPAVVKALQDDQFIPVISPIGYGEDGTAYNINADVVAGKIAEVLGAEKLLMMTNTPGVLDKSGKLLRSLSAQTIDELFADGTISGGMLPKISSALDAAKNGVPSVHVVDGRVPHCLLLELLTDQGVGTMISAH.

Substrate-binding positions include 73–74, arginine 95, and asparagine 197; that span reads GG.

It belongs to the acetylglutamate kinase family. ArgB subfamily.

It localises to the cytoplasm. It carries out the reaction N-acetyl-L-glutamate + ATP = N-acetyl-L-glutamyl 5-phosphate + ADP. It functions in the pathway amino-acid biosynthesis; L-arginine biosynthesis; N(2)-acetyl-L-ornithine from L-glutamate: step 2/4. Its function is as follows. Catalyzes the ATP-dependent phosphorylation of N-acetyl-L-glutamate. In Bordetella avium (strain 197N), this protein is Acetylglutamate kinase.